The chain runs to 624 residues: Glutamine--fructose-6-phosphate aminotransferase [isomerizing] (624 aa).

Catalysis depends on C2, which acts as the Nucleophile; for GATase activity. A Glutamine amidotransferase type-2 domain is found at 2 to 225 (CGIVGYVGRR…QDQAVVITAD (224 aa)). SIS domains follow at residues 297–436 (SDQE…ARGT) and 469–614 (LAHR…VDKP). The active-site For Fru-6P isomerization activity is K619.

In terms of assembly, homodimer.

It is found in the cytoplasm. It catalyses the reaction D-fructose 6-phosphate + L-glutamine = D-glucosamine 6-phosphate + L-glutamate. Its function is as follows. Catalyzes the first step in hexosamine metabolism, converting fructose-6P into glucosamine-6P using glutamine as a nitrogen source. This Mycobacterium bovis (strain ATCC BAA-935 / AF2122/97) protein is Glutamine--fructose-6-phosphate aminotransferase [isomerizing].